Here is a 456-residue protein sequence, read N- to C-terminus: Arginine biosynthesis bifunctional protein ArgJ, mitochondrial (456 aa).

Thr184, Lys213, Thr224, Glu311, Asn451, and Thr456 together coordinate substrate. Thr224 (nucleophile) is an active-site residue.

It belongs to the ArgJ family. As to quaternary structure, heterodimer of an alpha and a beta chain. The alpha and beta chains are autoproteolytically processed from a single precursor protein within the mitochondrion.

It localises to the mitochondrion matrix. It carries out the reaction N(2)-acetyl-L-ornithine + L-glutamate = N-acetyl-L-glutamate + L-ornithine. The enzyme catalyses L-glutamate + acetyl-CoA = N-acetyl-L-glutamate + CoA + H(+). The protein operates within amino-acid biosynthesis; L-arginine biosynthesis; L-ornithine and N-acetyl-L-glutamate from L-glutamate and N(2)-acetyl-L-ornithine (cyclic): step 1/1. Its pathway is amino-acid biosynthesis; L-arginine biosynthesis; N(2)-acetyl-L-ornithine from L-glutamate: step 1/4. Functionally, catalyzes two activities which are involved in the cyclic version of arginine biosynthesis: the synthesis of acetylglutamate from glutamate and acetyl-CoA, and of ornithine by transacetylation between acetylornithine and glutamate. The chain is Arginine biosynthesis bifunctional protein ArgJ, mitochondrial from Aspergillus oryzae (strain ATCC 42149 / RIB 40) (Yellow koji mold).